The chain runs to 101 residues: Small ribosomal subunit protein bS6 (101 aa).

Belongs to the bacterial ribosomal protein bS6 family. In terms of assembly, part of the 30S ribosomal subunit. Forms a tight heterodimer with protein bS18.

Located on the outer edge of the platform on the body of the 30S subunit. The sequence is that of Small ribosomal subunit protein bS6 (rpsF) from Thermus thermophilus (strain ATCC BAA-163 / DSM 7039 / HB27).